A 405-amino-acid polypeptide reads, in one-letter code: DNA primase DnaG (405 aa).

A Toprim domain is found at 172-248; it reads DSIIVVEGRA…HIDYIARAPP (77 aa). The Mg(2+) site is built by E178, D222, and D224. Positions 279 to 302 are disordered; sequence AAGEKTESQMSPQQPQLTQTQPTT. Residues 290 to 302 are compositionally biased toward low complexity; that stretch reads PQQPQLTQTQPTT.

It belongs to the archaeal DnaG primase family. As to quaternary structure, forms a ternary complex with MCM helicase and DNA. Component of the archaeal exosome complex. It depends on Mg(2+) as a cofactor.

It carries out the reaction ssDNA + n NTP = ssDNA/pppN(pN)n-1 hybrid + (n-1) diphosphate.. In terms of biological role, RNA polymerase that catalyzes the synthesis of short RNA molecules used as primers for DNA polymerase during DNA replication. Also part of the exosome, which is a complex involved in RNA degradation. Acts as a poly(A)-binding protein that enhances the interaction between heteromeric, adenine-rich transcripts and the exosome. In Pyrobaculum islandicum (strain DSM 4184 / JCM 9189 / GEO3), this protein is DNA primase DnaG.